Reading from the N-terminus, the 463-residue chain is Phytase A (463 aa).

An N-terminal signal peptide occupies residues 1 to 19; sequence MAFFTVALSLYYLLSRVST. Residue Asn26 is glycosylated (N-linked (GlcNAc...) asparagine). Cys29 and Cys38 are joined by a disulfide. Asn41 is a glycosylation site (N-linked (GlcNAc...) asparagine). 1D-myo-inositol hexakisphosphate is bound by residues Gln48, Tyr49, Arg79, His80, Arg83, and Thr86. Intrachain disulfides connect Cys69–Cys410, Cys211–Cys460, Cys260–Cys278, and Cys431–Cys439. Residue His80 is the Nucleophile of the active site. N-linked (GlcNAc...) asparagine glycosylation is found at Asn103 and Asn118. Arg163 contributes to the 1D-myo-inositol hexakisphosphate binding site. Residue Asn203 is glycosylated (N-linked (GlcNAc...) asparagine). Residue Asp207 coordinates 1D-myo-inositol hexakisphosphate. N-linked (GlcNAc...) asparagine glycosylation occurs at Asn226. Position 297 (Lys297) interacts with 1D-myo-inositol hexakisphosphate. N-linked (GlcNAc...) asparagine glycosylation is found at Asn331 and Asn335. 1D-myo-inositol hexakisphosphate is bound by residues His357 and Asp358. An N-linked (GlcNAc...) asparagine glycan is attached at Asn372.

The protein belongs to the histidine acid phosphatase family. Monomer. Post-translationally, seems to be cleaved into at least two pieces, most likely due to proteases in the supernatant. The N-terminal fragment, called phyB seems to retain phytase activity.

It is found in the secreted. It catalyses the reaction 1D-myo-inositol hexakisphosphate + H2O = 1D-myo-inositol 1,2,4,5,6-pentakisphosphate + phosphate. It carries out the reaction 1D-myo-inositol 1,2,4,5,6-pentakisphosphate + H2O = 1D-myo-inositol 1,2,5,6-tetrakisphosphate + phosphate. The enzyme catalyses 1D-myo-inositol 1,2,5,6-tetrakisphosphate + H2O = 1D-myo-inositol 1,2,6-trisphosphate + phosphate. The catalysed reaction is 1D-myo-inositol 1,2,6-trisphosphate + H2O = 1D-myo-inositol 1,2-bisphosphate + phosphate. It catalyses the reaction 1D-myo-inositol 1,2-bisphosphate + H2O = 1D-myo-inositol 2-phosphate + phosphate. Its function is as follows. Catalyzes the phosphate monoester hydrolysis of phytic acid (myo-inositol hexakisphosphate), which results in the stepwise formation of myo-inositol pentakis-, tetrakis-, tris-, bis-, and monophosphates, as well as the liberation of inorganic phosphate. Myo-inositol 2-monophosphate is the end product. Has a broad substrate specificity and is also able to dephosphorylate other classic acid phosphatase substrates such as p-nitrophenyl phosphate, phenyl phosphate, fructose 1,6-bisphosphate, fructose 6-phosphate, glucose 6-phosphate, ribose 5-phosphate, alpha-glycerophosphate, beta-glycerophosphate, 3-phosphoglycerate, as well as ADP and ATP. This chain is Phytase A, found in Emericella nidulans (strain FGSC A4 / ATCC 38163 / CBS 112.46 / NRRL 194 / M139) (Aspergillus nidulans).